The primary structure comprises 182 residues: Small ribosomal subunit protein uS4c (182 aa).

Residues 13-32 (GLTSKRPRSGSDLKNPLRSG) form a disordered region. The S4 RNA-binding domain maps to 82 to 143 (MRLDNILFRL…KQRSKALIQN (62 aa)).

This sequence belongs to the universal ribosomal protein uS4 family. As to quaternary structure, part of the 30S ribosomal subunit. Contacts protein S5. The interaction surface between S4 and S5 is involved in control of translational fidelity.

The protein localises to the plastid. The protein resides in the chloroplast. Functionally, one of the primary rRNA binding proteins, it binds directly to 16S rRNA where it nucleates assembly of the body of the 30S subunit. Its function is as follows. With S5 and S12 plays an important role in translational accuracy. The chain is Small ribosomal subunit protein uS4c (rps4) from Scadoxus puniceus (Paintbrush lily).